Reading from the N-terminus, the 577-residue chain is Isocitrate dehydrogenase kinase/phosphatase (577 aa).

ATP contacts are provided by residues 318–324 (APGVRGM) and Lys-339. The active site involves Asp-374.

The protein belongs to the AceK family.

It is found in the cytoplasm. It carries out the reaction L-seryl-[isocitrate dehydrogenase] + ATP = O-phospho-L-seryl-[isocitrate dehydrogenase] + ADP + H(+). Functionally, bifunctional enzyme which can phosphorylate or dephosphorylate isocitrate dehydrogenase (IDH) on a specific serine residue. This is a regulatory mechanism which enables bacteria to bypass the Krebs cycle via the glyoxylate shunt in response to the source of carbon. When bacteria are grown on glucose, IDH is fully active and unphosphorylated, but when grown on acetate or ethanol, the activity of IDH declines drastically concomitant with its phosphorylation. This chain is Isocitrate dehydrogenase kinase/phosphatase, found in Pseudomonas aeruginosa (strain UCBPP-PA14).